The chain runs to 465 residues: MRTKQLWQVALGDLAKRVSRANFETWLKHTELVALEGERATIAAPSSFAAEQLRNKFAADIQETLSLLLGRPIAVHFTVHGQDDEEHPVQRRPQRRALASEEGSASKQLSLTPSPEHGLNPRYTFEKFVVGPNNRLAHAAALAVADRPGEKFNPLFIYGGVGLGKTHLLHAIGHRALANRPTLKVCYVSSEVFTNELINAIRHQRTDDFRNRYRTIDILMIDDIQFIAGKESTQEEFFHTFNALYQSGKQIVISSDRPPRLIPDLADRLRSRFEGGLLADIQPPDLETRQAILIEKGRELGVQMPSDVVEFVARRIESNIRELEGALNRIVALAQLTHQPITLALAVEALREGDARAVREQLTPELVLHAVCQHFRVSLAELVGPGRRREIVLPRQIAMYLLREELGLSLVEIGQRLGGRDHTTVLHGVDKVEEQLRSDEQLRADVLAVRARLYEDAKAPLASRH.

Positions M1–P72 are domain I, interacts with DnaA modulators. The tract at residues P72–H117 is domain II. The disordered stretch occupies residues H80–G118. Over residues G103–P113 the composition is skewed to polar residues. The tract at residues G118–A334 is domain III, AAA+ region. 4 residues coordinate ATP: G162, G164, K165, and T166. The segment at Q335 to H465 is domain IV, binds dsDNA.

The protein belongs to the DnaA family. As to quaternary structure, oligomerizes as a right-handed, spiral filament on DNA at oriC.

It is found in the cytoplasm. In terms of biological role, plays an essential role in the initiation and regulation of chromosomal replication. ATP-DnaA binds to the origin of replication (oriC) to initiate formation of the DNA replication initiation complex once per cell cycle. Binds the DnaA box (a 9 base pair repeat at the origin) and separates the double-stranded (ds)DNA. Forms a right-handed helical filament on oriC DNA; dsDNA binds to the exterior of the filament while single-stranded (ss)DNA is stabiized in the filament's interior. The ATP-DnaA-oriC complex binds and stabilizes one strand of the AT-rich DNA unwinding element (DUE), permitting loading of DNA polymerase. After initiation quickly degrades to an ADP-DnaA complex that is not apt for DNA replication. Binds acidic phospholipids. In Thermomicrobium roseum (strain ATCC 27502 / DSM 5159 / P-2), this protein is Chromosomal replication initiator protein DnaA.